Here is a 155-residue protein sequence, read N- to C-terminus: Endoribonuclease YbeY (155 aa).

Zn(2+)-binding residues include H116, H120, and H126.

It belongs to the endoribonuclease YbeY family. Requires Zn(2+) as cofactor.

The protein localises to the cytoplasm. Single strand-specific metallo-endoribonuclease involved in late-stage 70S ribosome quality control and in maturation of the 3' terminus of the 16S rRNA. The protein is Endoribonuclease YbeY of Thermobifida fusca (strain YX).